Here is a 311-residue protein sequence, read N- to C-terminus: Ribonuclease HIII (311 aa).

Residues 95–311 (MSIVGSDEVG…NTEKAFRLLK (217 aa)) enclose the RNase H type-2 domain. D101, E102, and D206 together coordinate a divalent metal cation.

The protein belongs to the RNase HII family. RnhC subfamily. Mn(2+) is required as a cofactor. Mg(2+) serves as cofactor.

It is found in the cytoplasm. It carries out the reaction Endonucleolytic cleavage to 5'-phosphomonoester.. Endonuclease that specifically degrades the RNA of RNA-DNA hybrids. The chain is Ribonuclease HIII from Bacillus thuringiensis subsp. konkukian (strain 97-27).